The chain runs to 156 residues: Ribosomal RNA large subunit methyltransferase H (156 aa).

Residues Leu73, Gly104, and 123 to 128 (LSSLTL) each bind S-adenosyl-L-methionine.

The protein belongs to the RNA methyltransferase RlmH family. Homodimer.

It is found in the cytoplasm. The catalysed reaction is pseudouridine(1915) in 23S rRNA + S-adenosyl-L-methionine = N(3)-methylpseudouridine(1915) in 23S rRNA + S-adenosyl-L-homocysteine + H(+). Functionally, specifically methylates the pseudouridine at position 1915 (m3Psi1915) in 23S rRNA. The polypeptide is Ribosomal RNA large subunit methyltransferase H (Bordetella avium (strain 197N)).